Consider the following 381-residue polypeptide: Alkanesulfonate monooxygenase (381 aa).

Belongs to the SsuD family. As to quaternary structure, homotetramer.

It carries out the reaction an alkanesulfonate + FMNH2 + O2 = an aldehyde + FMN + sulfite + H2O + 2 H(+). Its function is as follows. Catalyzes the desulfonation of aliphatic sulfonates. The polypeptide is Alkanesulfonate monooxygenase (Escherichia coli (strain SE11)).